Reading from the N-terminus, the 524-residue chain is Probable endopeptidase p60 (524 aa).

The signal sequence occupies residues 1–27; that stretch reads MNMKKATIAATAGIAVTAFAAPTIASA. Residues 28 to 71 form the LysM 1 domain; it reads STVVVEAGDTLWGIAQSKGTTVDALKKANNLTSDKIVPGQKLQV. Residues 78-142 enclose the SH3b domain; sequence KTEKSVSATW…VNGKYLGDAV (65 aa). The disordered stretch occupies residues 150-188; sequence QEVKQETTKQTAPAAETKTEVKQSTPAPTAPKAAETKTA. A compositionally biased stretch (low complexity) spans 174–188; the sequence is TPAPTAPKAAETKTA. The 44-residue stretch at 196 to 239 folds into the LysM 2 domain; it reads TTHTVKSGDTIWALSVKYGASVQDLMSWNNLSSSSIYVGQKIAV. The segment covering 272–299 has biased composition (low complexity); that stretch reads NTNTTVKKEVTTQTQTNTTKAPAQAAKP. Residues 272–313 are disordered; it reads NTNTTVKKEVTTQTQTNTTKAPAQAAKPAPAPAPAPTVNTNA. Residues 314–357 form the LysM 3 domain; that stretch reads STYTVKSGDSLSKIANTFGTSVSKIKALNNLTSDNLQVGTVLKV. Positions 360–408 are disordered; the sequence is TVPTTNTNNNSNTTAPTTNTSNNNTSSNTSTPSKNTNTNTNQGSSNSAS. Residues 362-408 show a composition bias toward low complexity; sequence PTTNTNNNSNTTAPTTNTSNNNTSSNTSTPSKNTNTNTNQGSSNSAS. The NlpC/P60 domain maps to 406–524; sequence SASASALIAE…GKYLVGFGRV (119 aa). Residue Cys436 is the Nucleophile of the active site. The active-site Proton acceptor is His486. The active site involves Asn498.

Belongs to the peptidase C40 family.

Its function is as follows. This major extracellular protein may be involved in the invasion of non-professional phagocytic cells by Listeria. This Listeria welshimeri protein is Probable endopeptidase p60 (iap).